Here is a 607-residue protein sequence, read N- to C-terminus: Protease Do-like 2, chloroplastic (607 aa).

Residues 41–104 (SSNIKRKSSR…LSDFSRDQQT (64 aa)) are disordered. The span at 87–104 (PKKEKKESLSDFSRDQQT) shows a compositional bias: basic and acidic residues. A serine protease region spans residues 118-317 (VVKVYCTHTA…LTDYERNGKY (200 aa)). Active-site charge relay system residues include H159, D190, and S268. Residues 308-403 (LTDYERNGKY…YLISQKFAGD (96 aa)) form the PDZ domain.

This sequence belongs to the peptidase S1C family.

It localises to the plastid. The protein localises to the chloroplast thylakoid membrane. In terms of biological role, serine protease that performs the primary cleavage of the photodamaged D1 protein in plant photosystem II. The polypeptide is Protease Do-like 2, chloroplastic (DEGP2) (Arabidopsis thaliana (Mouse-ear cress)).